The sequence spans 358 residues: Alanine racemase (358 aa).

Lys-35 serves as the catalytic Proton acceptor; specific for D-alanine. Lys-35 is modified (N6-(pyridoxal phosphate)lysine). Residue Arg-130 participates in substrate binding. The active-site Proton acceptor; specific for L-alanine is the Tyr-255. Met-303 contacts substrate.

This sequence belongs to the alanine racemase family. Pyridoxal 5'-phosphate is required as a cofactor.

It carries out the reaction L-alanine = D-alanine. It participates in amino-acid biosynthesis; D-alanine biosynthesis; D-alanine from L-alanine: step 1/1. Its function is as follows. Catalyzes the interconversion of L-alanine and D-alanine. May also act on other amino acids. The chain is Alanine racemase (alr) from Shewanella baltica (strain OS195).